We begin with the raw amino-acid sequence, 403 residues long: Pantothenate kinase (403 aa).

3 positions are modified to phosphoserine: Ser-80, Ser-82, and Ser-84.

It belongs to the type II pantothenate kinase family.

The protein localises to the cytoplasm. Its subcellular location is the nucleus. It catalyses the reaction (R)-pantothenate + ATP = (R)-4'-phosphopantothenate + ADP + H(+). It participates in cofactor biosynthesis; coenzyme A biosynthesis; CoA from (R)-pantothenate: step 1/5. Regulated by feedback inhibition by malonyl-CoA. Plays a role in the physiological regulation of the intracellular CoA concentration. The polypeptide is Pantothenate kinase (Schizosaccharomyces pombe (strain 972 / ATCC 24843) (Fission yeast)).